The following is a 153-amino-acid chain: Riboflavin synthase (153 aa).

It belongs to the DMRL synthase family. Homooligomer. Requires Mg(2+) as cofactor.

It catalyses the reaction 2 6,7-dimethyl-8-(1-D-ribityl)lumazine + H(+) = 5-amino-6-(D-ribitylamino)uracil + riboflavin. It participates in cofactor biosynthesis; riboflavin biosynthesis; riboflavin from 2-hydroxy-3-oxobutyl phosphate and 5-amino-6-(D-ribitylamino)uracil: step 2/2. Its activity is regulated as follows. Inhibited by EDTA. The polypeptide is Riboflavin synthase (ribC) (Methanothermobacter thermautotrophicus (strain ATCC 29096 / DSM 1053 / JCM 10044 / NBRC 100330 / Delta H) (Methanobacterium thermoautotrophicum)).